We begin with the raw amino-acid sequence, 91 residues long: Small ribosomal subunit protein uS15 (91 aa).

The protein belongs to the universal ribosomal protein uS15 family. As to quaternary structure, part of the 30S ribosomal subunit. Forms a bridge to the 50S subunit in the 70S ribosome, contacting the 23S rRNA.

One of the primary rRNA binding proteins, it binds directly to 16S rRNA where it helps nucleate assembly of the platform of the 30S subunit by binding and bridging several RNA helices of the 16S rRNA. Its function is as follows. Forms an intersubunit bridge (bridge B4) with the 23S rRNA of the 50S subunit in the ribosome. The sequence is that of Small ribosomal subunit protein uS15 from Deinococcus radiodurans (strain ATCC 13939 / DSM 20539 / JCM 16871 / CCUG 27074 / LMG 4051 / NBRC 15346 / NCIMB 9279 / VKM B-1422 / R1).